Reading from the N-terminus, the 143-residue chain is D-aminoacyl-tRNA deacylase (143 aa).

Residues 135-136 (GP) carry the Gly-cisPro motif, important for rejection of L-amino acids motif.

This sequence belongs to the DTD family. As to quaternary structure, homodimer.

It is found in the cytoplasm. It catalyses the reaction glycyl-tRNA(Ala) + H2O = tRNA(Ala) + glycine + H(+). The enzyme catalyses a D-aminoacyl-tRNA + H2O = a tRNA + a D-alpha-amino acid + H(+). In terms of biological role, an aminoacyl-tRNA editing enzyme that deacylates mischarged D-aminoacyl-tRNAs. Also deacylates mischarged glycyl-tRNA(Ala), protecting cells against glycine mischarging by AlaRS. Acts via tRNA-based rather than protein-based catalysis; rejects L-amino acids rather than detecting D-amino acids in the active site. By recycling D-aminoacyl-tRNA to D-amino acids and free tRNA molecules, this enzyme counteracts the toxicity associated with the formation of D-aminoacyl-tRNA entities in vivo and helps enforce protein L-homochirality. The protein is D-aminoacyl-tRNA deacylase of Mycobacterium bovis (strain ATCC BAA-935 / AF2122/97).